Here is a 328-residue protein sequence, read N- to C-terminus: GMP reductase (328 aa).

The Thioimidate intermediate role is filled by Cys176. 205–228 contacts NADP(+); it reads IIADGGIRTHGDIAKSIRFGASMI.

The protein belongs to the IMPDH/GMPR family. GuaC type 2 subfamily.

The enzyme catalyses IMP + NH4(+) + NADP(+) = GMP + NADPH + 2 H(+). Catalyzes the irreversible NADPH-dependent deamination of GMP to IMP. It functions in the conversion of nucleobase, nucleoside and nucleotide derivatives of G to A nucleotides, and in maintaining the intracellular balance of A and G nucleotides. The protein is GMP reductase of Streptococcus pneumoniae serotype 19F (strain G54).